Here is a 542-residue protein sequence, read N- to C-terminus: Peptide chain release factor 3 (542 aa).

The tr-type G domain maps to 14 to 283 (DKRRNFAIIS…AFLEYALKPG (270 aa)). GTP contacts are provided by residues 23-30 (SHPDAGKT), 91-95 (DTPGH), and 145-148 (NKMD).

Belongs to the TRAFAC class translation factor GTPase superfamily. Classic translation factor GTPase family. PrfC subfamily.

It localises to the cytoplasm. Functionally, increases the formation of ribosomal termination complexes and stimulates activities of RF-1 and RF-2. It binds guanine nucleotides and has strong preference for UGA stop codons. It may interact directly with the ribosome. The stimulation of RF-1 and RF-2 is significantly reduced by GTP and GDP, but not by GMP. In Trichodesmium erythraeum (strain IMS101), this protein is Peptide chain release factor 3.